Reading from the N-terminus, the 382-residue chain is uncharacterized protein (382 aa).

12 helical membrane passes run 8–28 (VLLLLCGLLLFTISIAVLNTL), 41–61 (WQVGMVSSSYFSGNLVGTLIA), 73–93 (SYHYSCILFALATCGLMLSVD), 94–114 (FWSWLGWRFFAGVACALIWVI), 133–153 (AAYMMVYYLGTVTGQLLLGVV), 157–177 (LLSVIPWVSALVITAMLPLLF), 208–228 (GCIISGVLLGSLYGLLPLYLS), 235–255 (ASVGWWMALLVSSGIIGQWPI), 274–294 (VVILGSIAILGNYALAPALFI), 295–315 (LGCAGFTLYPVAMAWACEKVS), 325–345 (ALLMSYTIGSLTGPTMTSLLM), and 349–369 (SDNLLFIMIAGVALVYLMMLL).

It belongs to the major facilitator superfamily. YcaD (TC 2.A.1.26) family.

The protein localises to the cell inner membrane. This is an uncharacterized protein from Yersinia enterocolitica serotype O:8 / biotype 1B (strain NCTC 13174 / 8081).